The following is a 121-amino-acid chain: Ribonuclease P protein component (121 aa).

This sequence belongs to the RnpA family. Consists of a catalytic RNA component (M1 or rnpB) and a protein subunit.

The enzyme catalyses Endonucleolytic cleavage of RNA, removing 5'-extranucleotides from tRNA precursor.. Its function is as follows. RNaseP catalyzes the removal of the 5'-leader sequence from pre-tRNA to produce the mature 5'-terminus. It can also cleave other RNA substrates such as 4.5S RNA. The protein component plays an auxiliary but essential role in vivo by binding to the 5'-leader sequence and broadening the substrate specificity of the ribozyme. The protein is Ribonuclease P protein component of Neisseria gonorrhoeae (strain ATCC 700825 / FA 1090).